We begin with the raw amino-acid sequence, 507 residues long: uncharacterized protein (507 aa).

3 disordered regions span residues 91-162 (NEKT…KKLL), 174-255 (EKLQ…QQQQ), and 309-422 (KRKL…NYST). Residues 116 to 143 (DSSESDSSESESDSSESESESESNETSE) are compositionally biased toward acidic residues. Over residues 144–155 (NESSSSSEPESS) the composition is skewed to low complexity. Residues 174 to 193 (EKLQQEQQKQKEAQKPKEKP) are compositionally biased toward basic and acidic residues. 3 stretches are compositionally biased toward low complexity: residues 194-236 (QQQQ…QQIE), 243-255 (PQQQ…QQQQ), and 313-350 (QSQL…TNKP). The span at 351-360 (LSKRQKKLLK) shows a compositional bias: basic residues. A compositionally biased stretch (low complexity) spans 378 to 409 (NNKNDNSTNDSNNNNDNNNNNKNDTNDSNNDD).

This is an uncharacterized protein from Dictyostelium discoideum (Social amoeba).